The chain runs to 208 residues: MQPVTIALAKGRPAKQTIKLLQAAGLTFEELDATSRKLVFYNEDRTARVIFLKGMDVPIYVEKGAADIGIVGKDNIIESQAEVYELLDLGIGKCKFSIAAKQGVTLSSDNEITIATKYPIVAKRYFSKRNQSIDVVKLNGSVELAPLIGLADYIVDIVETGNTLRENGLEILEDIETISTKAIVNKASFATRSAEIQSIINRLSTVVG.

Belongs to the ATP phosphoribosyltransferase family. Short subfamily. Heteromultimer composed of HisG and HisZ subunits.

The protein localises to the cytoplasm. It carries out the reaction 1-(5-phospho-beta-D-ribosyl)-ATP + diphosphate = 5-phospho-alpha-D-ribose 1-diphosphate + ATP. The protein operates within amino-acid biosynthesis; L-histidine biosynthesis; L-histidine from 5-phospho-alpha-D-ribose 1-diphosphate: step 1/9. Catalyzes the condensation of ATP and 5-phosphoribose 1-diphosphate to form N'-(5'-phosphoribosyl)-ATP (PR-ATP). Has a crucial role in the pathway because the rate of histidine biosynthesis seems to be controlled primarily by regulation of HisG enzymatic activity. This chain is ATP phosphoribosyltransferase, found in Oceanobacillus iheyensis (strain DSM 14371 / CIP 107618 / JCM 11309 / KCTC 3954 / HTE831).